Reading from the N-terminus, the 625-residue chain is Probable potassium transport system protein Kup 1 (625 aa).

Helical transmembrane passes span 14–34 (LSLLALSALGIVFGDIGTSPL), 50–70 (AAAVLGALSLVIWTLFIITTV), 104–124 (IVALGLFGAALIYGDGAITPA), 139–159 (PALQPYVVPAAVVILLALFAI), 170–190 (LFGPVMLLWFVTIAVLGLVGI), 213–233 (GATGFLVLGSVFLCVTGAEAL), 249–269 (WFAVVFPSLIINYAGQAALVI), 287–307 (LLLPLIGLATLATIIASQSVI), 339–359 (IYVGAVNWLLMLVTVSLTIGF), 368–388 (AYGIAVSLTMLMTSALLFIAM), 396–416 (LLAAGAVAGVFLTIDSAFFLA), and 421–441 (IAEGGYVPLLLATSVYGLMWI).

The protein belongs to the HAK/KUP transporter (TC 2.A.72) family.

Its subcellular location is the cell inner membrane. It catalyses the reaction K(+)(in) + H(+)(in) = K(+)(out) + H(+)(out). In terms of biological role, transport of potassium into the cell. Likely operates as a K(+):H(+) symporter. The protein is Probable potassium transport system protein Kup 1 of Bradyrhizobium sp. (strain ORS 278).